The sequence spans 197 residues: Probable molybdenum cofactor guanylyltransferase (197 aa).

GTP contacts are provided by residues 12-14 (LAG), lysine 24, aspartate 71, and aspartate 103. Mg(2+) is bound at residue aspartate 103.

Belongs to the MobA family. Mg(2+) serves as cofactor.

The protein resides in the cytoplasm. The catalysed reaction is Mo-molybdopterin + GTP + H(+) = Mo-molybdopterin guanine dinucleotide + diphosphate. Functionally, transfers a GMP moiety from GTP to Mo-molybdopterin (Mo-MPT) cofactor (Moco or molybdenum cofactor) to form Mo-molybdopterin guanine dinucleotide (Mo-MGD) cofactor. This Mycobacterium avium (strain 104) protein is Probable molybdenum cofactor guanylyltransferase.